A 450-amino-acid polypeptide reads, in one-letter code: SEVCFPRLGCFSDDAPWAGIVQRPLKILPWSPKDVDTRFLLYTNQNQNNYQELVADPSTITNSNFRMDRKTRFIIHGFIDKGEEDWLSNICKNLFKVESVNCICVDWKGGSRTGYTQASQNIRIVGAEVAYFVEVLKSSLGYSPSNVHVIGHSLGSHAAGEAGRRTNGTIERITGLDPAEPCFQGTPELVRLDPSDAKFVDVIHTDAAPIIPNLGFGMSQTVGHLDFFPNGGKQMPGCQKNILSQIVDIDGIWEGTRDFVACNHLRSYKYYADSILNPDGFAGFPCDSYNVFTANKCFPCPSEGCPQMGHYADRFPGKTNGVSQVFYLNTGDASNFARWRYKVSVTLSGKKVTGHILVSLFGNEGNSRQYEIYKGTLQPDNTHSDEFDSDVEVGDLQKVKFIWYNNNVINPTLPRVGASKITVERNDGKVYDFCSQETVREEVLLTLNPC.

3 cysteine pairs are disulfide-bonded: C4–C10, C91–C102, and C91–C104. Residue S153 is the Nucleophile of the active site. N-linked (GlcNAc...) asparagine glycosylation occurs at N167. The active-site Charge relay system is D177. The Ca(2+) site is built by E188, R191, D193, and D196. Cysteines 238 and 262 form a disulfide. Catalysis depends on H264, which acts as the Charge relay system. 3 disulfide bridges follow: C286-C297, C300-C305, and C434-C450. In terms of domain architecture, PLAT spans 339-450; the sequence is WRYKVSVTLS…EEVLLTLNPC (112 aa).

The protein belongs to the AB hydrolase superfamily. Lipase family. In terms of assembly, forms a 1:1 stoichiometric complex with (pro)colipase/CLPS.

It localises to the secreted. The catalysed reaction is a triacylglycerol + H2O = a diacylglycerol + a fatty acid + H(+). It catalyses the reaction 1,2,3-tributanoylglycerol + H2O = dibutanoylglycerol + butanoate + H(+). It carries out the reaction 1,2,3-tri-(9Z-octadecenoyl)-glycerol + H2O = di-(9Z)-octadecenoylglycerol + (9Z)-octadecenoate + H(+). The enzyme catalyses all-trans-retinyl hexadecanoate + H2O = all-trans-retinol + hexadecanoate + H(+). The catalysed reaction is 1,2-di-(9Z-octadecenoyl)-glycerol + H2O = (9Z-octadecenoyl)-glycerol + (9Z)-octadecenoate + H(+). Inhibited by bile salts, is reactivated by (pro)colipase/CLPS. In terms of biological role, plays an important role in fat metabolism. It preferentially splits the esters of long-chain fatty acids at positions 1 and 3, producing mainly 2-monoacylglycerol and free fatty acids, and shows considerably higher activity against insoluble emulsified substrates than against soluble ones. The polypeptide is Pancreatic triacylglycerol lipase (PNLIP) (Sus scrofa (Pig)).